The chain runs to 183 residues: Probable chorismate pyruvate-lyase (183 aa).

Arg-79, Leu-115, and Glu-168 together coordinate substrate.

It belongs to the UbiC family.

The protein resides in the cytoplasm. It catalyses the reaction chorismate = 4-hydroxybenzoate + pyruvate. The protein operates within cofactor biosynthesis; ubiquinone biosynthesis. Removes the pyruvyl group from chorismate, with concomitant aromatization of the ring, to provide 4-hydroxybenzoate (4HB) for the ubiquinone pathway. This chain is Probable chorismate pyruvate-lyase, found in Chromohalobacter salexigens (strain ATCC BAA-138 / DSM 3043 / CIP 106854 / NCIMB 13768 / 1H11).